The following is a 299-amino-acid chain: MAYSQPSFALLCRNNQTGQEFNSGDTSFRVNVSPVVQYDKSISVLDLSQLVSCQNEDSTGQNYDYLKILKGSGFSPALDTKTYGRLDFTSRPTGYARQLPLQFDLQVTEAFYQYGVWKPFPAKLYLYPEPGVFGKVINNGDLLATLYVNKFSTKGQEAGERNFTWRFYATNDVHIQTGTCRVSSNNVKVDLPSYPGGPVTVPLTVRCDQTQSVSYTLSGPVTGSGNTVFANTAASGAGGVGVQLSDKAGPVPAGQPRSLGQVGSSPVSLGLKASYALTGQASLTPGAVQSVINVTFSYN.

Belongs to the fimbrial protein family.

It is found in the fimbrium. Functionally, fimbriae (also called pili), polar filaments radiating from the surface of the bacterium to a length of 0.5-1.5 micrometers and numbering 100-300 per cell, enable bacteria to colonize the epithelium of specific host organs. Its function is as follows. A minor fimbrial subunit. This protein is necessary for full expression of S-specific binding. S-fimbrial adhesins enable pathogenic E.coli causing urinary-tract infections or newborn meningitis to attach to glycoproteins terminating with alpha-sialic acid-(2-3)-beta-Gal. The protein is S-fimbrial protein subunit SfaH (sfaH) of Escherichia coli O6:K15:H31 (strain 536 / UPEC).